Consider the following 339-residue polypeptide: DNA-directed RNA polymerase subunit alpha (339 aa).

The interval 1 to 233 (MVREEITGST…DLFLPFLHTE (233 aa)) is alpha N-terminal domain (alpha-NTD). Residues 264-339 (KKGIPLNCIF…IDLPKNKFSL (76 aa)) are alpha C-terminal domain (alpha-CTD).

Belongs to the RNA polymerase alpha chain family. In plastids the minimal PEP RNA polymerase catalytic core is composed of four subunits: alpha, beta, beta', and beta''. When a (nuclear-encoded) sigma factor is associated with the core the holoenzyme is formed, which can initiate transcription.

Its subcellular location is the plastid. It localises to the chloroplast. The catalysed reaction is RNA(n) + a ribonucleoside 5'-triphosphate = RNA(n+1) + diphosphate. DNA-dependent RNA polymerase catalyzes the transcription of DNA into RNA using the four ribonucleoside triphosphates as substrates. This is DNA-directed RNA polymerase subunit alpha from Zea mays (Maize).